Consider the following 424-residue polypeptide: Histidine--tRNA ligase (424 aa).

Belongs to the class-II aminoacyl-tRNA synthetase family. As to quaternary structure, homodimer.

It localises to the cytoplasm. It carries out the reaction tRNA(His) + L-histidine + ATP = L-histidyl-tRNA(His) + AMP + diphosphate + H(+). This chain is Histidine--tRNA ligase, found in Salmonella paratyphi B (strain ATCC BAA-1250 / SPB7).